The chain runs to 833 residues: Leucine--tRNA ligase (833 aa).

The 'HIGH' region motif lies at 41–52; it reads PYPSGAGLHVGH. Positions 610 to 614 match the 'KMSKS' region motif; the sequence is KMSKS. K613 serves as a coordination point for ATP.

The protein belongs to the class-I aminoacyl-tRNA synthetase family.

Its subcellular location is the cytoplasm. The enzyme catalyses tRNA(Leu) + L-leucine + ATP = L-leucyl-tRNA(Leu) + AMP + diphosphate. The sequence is that of Leucine--tRNA ligase from Streptococcus pneumoniae (strain ATCC 700669 / Spain 23F-1).